A 334-amino-acid polypeptide reads, in one-letter code: Malate dehydrogenase, cytoplasmic (334 aa).

An N-acetylserine modification is found at Ser2. Residues Gly11–Ala17 and Asp42 each bind NAD(+). Substrate-binding residues include Arg92 and Arg98. Asn105 provides a ligand contact to NAD(+). Lys110 bears the N6-succinyllysine mark. Residue Gln112 participates in NAD(+) binding. Lys118 and Lys121 each carry N6-acetyllysine. Val129–Asn131 is an NAD(+) binding site. Substrate is bound by residues Asn131 and Arg162. Catalysis depends on His187, which acts as the Proton acceptor. Position 214 is an N6-succinyllysine (Lys214). A Phosphoserine modification is found at Ser217. At Arg230 the chain carries Omega-N-methylarginine. A Phosphoserine modification is found at Ser241. Lys298 is subject to N6-acetyllysine; alternate. At Lys298 the chain carries N6-succinyllysine; alternate. Phosphoserine is present on Ser309. Lys318 carries the N6-succinyllysine modification. A Phosphoserine modification is found at Ser333.

It belongs to the LDH/MDH superfamily. MDH type 2 family. As to quaternary structure, homodimer. Post-translationally, ISGylated. Acetylation at Lys-118 dramatically enhances enzymatic activity and promotes adipogenic differentiation.

The protein localises to the cytoplasm. Its subcellular location is the cytosol. The enzyme catalyses (S)-malate + NAD(+) = oxaloacetate + NADH + H(+). It catalyses the reaction (2R)-2-hydroxy-3-(4-hydroxyphenyl)propanoate + NAD(+) = 3-(4-hydroxyphenyl)pyruvate + NADH + H(+). It carries out the reaction (S)-2-hydroxyglutarate + NAD(+) = 2-oxoglutarate + NADH + H(+). Functionally, catalyzes the reduction of aromatic alpha-keto acids in the presence of NADH. Plays essential roles in the malate-aspartate shuttle and the tricarboxylic acid cycle, important in mitochondrial NADH supply for oxidative phosphorylation. Catalyzes the reduction of 2-oxoglutarate to 2-hydroxyglutarate, leading to elevated reactive oxygen species (ROS). In Bos taurus (Bovine), this protein is Malate dehydrogenase, cytoplasmic (MDH1).